A 100-amino-acid chain; its full sequence is ESAT-6-like protein EsxB (100 aa).

Residues Gly80 to Ile100 are disordered.

It belongs to the WXG100 family. CFP-10 subfamily. As to quaternary structure, forms a tight 1:1 complex with EsxA. An artificial EsxA-EsxB heterodimer interacts with EspA.

The protein resides in the secreted. Functionally, an exported protein. Plays a role in DNA conjugation, in at least a donor strain. In Mycolicibacterium smegmatis (strain ATCC 700084 / mc(2)155) (Mycobacterium smegmatis), this protein is ESAT-6-like protein EsxB.